The chain runs to 304 residues: Bifunctional phosphoglucose/phosphomannose isomerase (304 aa).

Positions 16–147 constitute an SIS domain; it reads FDKSFKVGKY…KPKIGDVDEA (132 aa). D-fructose 6-phosphate is bound by residues Gly35, Ser36, Ser74, Ser76, Thr79, and Arg122. Glu196 functions as the Proton acceptor in the catalytic mechanism. His212 and Lys300 together coordinate D-fructose 6-phosphate. Catalysis depends on His212, which acts as the Proton donor. The active-site Proton acceptor is the Lys300.

This sequence belongs to the PGI/PMI family. Homodimer.

It catalyses the reaction alpha-D-glucose 6-phosphate = beta-D-fructose 6-phosphate. It carries out the reaction D-mannose 6-phosphate = D-fructose 6-phosphate. Functionally, dual specificity isomerase that catalyzes the isomerization of both glucose-6-phosphate and mannose-6-phosphate to fructose-6-phosphate. This Thermoplasma volcanium (strain ATCC 51530 / DSM 4299 / JCM 9571 / NBRC 15438 / GSS1) protein is Bifunctional phosphoglucose/phosphomannose isomerase.